The sequence spans 228 residues: Cytidylate kinase (228 aa).

An ATP-binding site is contributed by 12-20; the sequence is GPSGAGKGT.

It belongs to the cytidylate kinase family. Type 1 subfamily.

The protein localises to the cytoplasm. It catalyses the reaction CMP + ATP = CDP + ADP. The catalysed reaction is dCMP + ATP = dCDP + ADP. This chain is Cytidylate kinase, found in Photobacterium profundum (strain SS9).